An 895-amino-acid polypeptide reads, in one-letter code: Histone-lysine N-methyltransferase EZ3 (895 aa).

Residues 1–13 (MASSSKASDSSSQ) are compositionally biased toward low complexity. 2 disordered regions span residues 1-30 (MASS…APAS) and 396-446 (SSVS…PGKR). The span at 396–422 (SSVSAEESTTPPSADTSETENASSDMP) shows a compositional bias: polar residues. Positions 427–436 (RKYKISKRGP) are enriched in basic residues. The region spanning 528–578 (TLSCWSALERDLYLKGIEIFGKNSCLIARNLLSGMKTCMEVANYMYNNGAA) is the SANT domain. In terms of domain architecture, CXC spans 628-732 (AGHPTVRKRI…SLGEPPARGD (105 aa)). Positions 747 to 862 (QRILLGRSDV…ASEELFYDYR (116 aa)) constitute an SET domain. The segment at 870–895 (AWARRPEGSKKDEASVSHHRAHKVAR) is disordered. Basic and acidic residues predominate over residues 873–885 (RRPEGSKKDEASV). Over residues 886 to 895 (SHHRAHKVAR) the composition is skewed to basic residues.

Belongs to the class V-like SAM-binding methyltransferase superfamily. Histone-lysine methyltransferase family. EZ subfamily. In terms of tissue distribution, widely expressed.

It is found in the nucleus. It catalyses the reaction L-lysyl(27)-[histone H3] + 3 S-adenosyl-L-methionine = N(6),N(6),N(6)-trimethyl-L-lysyl(27)-[histone H3] + 3 S-adenosyl-L-homocysteine + 3 H(+). In terms of biological role, polycomb group (PcG) protein. Catalytic subunit of some PcG multiprotein complex, which methylates 'Lys-27' of histone H3, leading to transcriptional repression of the affected target genes. PcG proteins are not required to initiate repression, but to maintain it during later stages of development. In Zea mays (Maize), this protein is Histone-lysine N-methyltransferase EZ3 (EZ3).